A 210-amino-acid chain; its full sequence is Noranthrone monooxygenase (210 aa).

The next 4 membrane-spanning stretches (helical) occupy residues 59–79, 105–125, 131–151, and 188–208; these read TGSFLTGAMMNLHLLTIPILI, GIALVTGALYGYAAWAKYSVG, WMVAGVTTVSMVPYTWMFMNA, and VRALFPLAGSVMGMLGVCGVV.

The protein belongs to the anthrone oxygenase family.

It localises to the membrane. It catalyses the reaction noranthrone + O2 = norsolorinic acid + H2O. The protein operates within mycotoxin biosynthesis; aflatoxin biosynthesis. In terms of biological role, monooxygenase that converts norsolorinic acid anthrone to norsolorinic acid during aflatoxin biosynthesis. The chain is Noranthrone monooxygenase (hypC) from Aspergillus flavus (strain ATCC 200026 / FGSC A1120 / IAM 13836 / NRRL 3357 / JCM 12722 / SRRC 167).